The sequence spans 352 residues: Endoplasmic reticulum GDP-fucose transporter (352 aa).

The next 10 membrane-spanning stretches (helical) occupy residues 9 to 29, 34 to 54, 70 to 90, 96 to 116, 126 to 146, 163 to 183, 201 to 221, 249 to 271, 276 to 298, and 305 to 325; these read LGML…ELII, GAGN…GLVF, YVIL…AFNF, LHMI…IVLL, SSVA…SGDV, FFWW…TAYM, ALFF…GNIV, LMLF…VYVL, ASLT…SIIY, and LNHW…ANVI. A Prevents secretion from ER motif is present at residues 350-352; it reads KVE.

It belongs to the nucleotide-sugar transporter family. SLC35B subfamily.

It localises to the endoplasmic reticulum membrane. Sugar transporter that specifically mediates the transport of UDP-N-acetylglucosamine (UDP-GlcNAc), GDP-fucose and UDP-xylose. Functions redundantly with Gfr in the O-fucosylation of Notch, positively regulating Notch signaling. Involved in the biosynthesis of heparan sulfate-glycosaminoglycan (HS-GAG) and in Dpp signaling in the wing imaginal disk. This is Endoplasmic reticulum GDP-fucose transporter from Drosophila melanogaster (Fruit fly).